Here is a 396-residue protein sequence, read N- to C-terminus: Serine/threonine-protein kinase GRIK1 (396 aa).

Residues 22–65 (ERSRHSPNPYDDDTYSHDSGETSNPGGDDEEGEEEEEVEELSRS) are disordered. The span at 48–60 (GDDEEGEEEEEVE) shows a compositional bias: acidic residues. In terms of domain architecture, Protein kinase spans 108 to 369 (FVRERKIGSG…LKAVAEHPWI (262 aa)). ATP-binding positions include 114 to 122 (IGSGSYGKV) and Lys137. Thr154 carries the phosphothreonine; by autocatalysis modification. Catalysis depends on Asp239, which acts as the Proton acceptor. Phosphoserine; by KIN10 is present on Ser261.

The protein belongs to the protein kinase superfamily. Ser/Thr protein kinase family. In terms of assembly, associates with the SNF1-related protein kinase (SnRK) complex. Interacts with AL1, a geminivirus (TGMV) protein essential for viral replication. As to expression, expressed in shoot apical meristem, leaf primordium and emerging petiole (at protein level).

Its subcellular location is the cytoplasm. The protein localises to the nucleus. The enzyme catalyses L-seryl-[protein] + ATP = O-phospho-L-seryl-[protein] + ADP + H(+). The catalysed reaction is L-threonyl-[protein] + ATP = O-phospho-L-threonyl-[protein] + ADP + H(+). Activated when autophosphorylated at Thr-154 and inactivated when phosphorylated at Ser-261 by SnRK1.1/KIN10. Functionally, activates SnRK1.1/KIN10 and SnRK1.2/KIN11 by phosphorylation of their activation-loop 'Thr-198' and 'Thr-176', respectively. Required for the regulation by SnRK1 kinases of the transcription of a large set of genes, the modification the activity of metabolic enzymes, and the control of various nutrient-responsive cellular developmental processes. The chain is Serine/threonine-protein kinase GRIK1 (GRIK1) from Arabidopsis thaliana (Mouse-ear cress).